Here is a 423-residue protein sequence, read N- to C-terminus: 5-hydroxytryptamine receptor 1A-alpha (423 aa).

At 1–47 the chain is on the extracellular side; sequence MDLRATSSNDSNATSGYSDTAAVDWDEGENATGSGSLPDPELSYQII. 3 N-linked (GlcNAc...) asparagine glycosylation sites follow: N9, N12, and N30. A helical transmembrane segment spans residues 48–68; it reads TSLFLGALILCSIFGNSCVVA. Residues 69-82 lie on the Cytoplasmic side of the membrane; the sequence is AIALERSLQNVANY. The chain crosses the membrane as a helical span at residues 83 to 107; the sequence is LIGSLAVTDLMVSVLVLPMAALYQV. Residues 108–116 lie on the Extracellular side of the membrane; that stretch reads LNKWTLGQD. Residues 117–141 form a helical membrane-spanning segment; sequence ICDLFIALDVLCCTSSILHLCAIAL. A disulfide bond links C118 and C196. Positions 125 and 129 each coordinate serotonin. Residues 142–144 carry the DRY motif; important for ligand-induced conformation changes motif; that stretch reads DRY. The Cytoplasmic segment spans residues 142-161; it reads DRYWAITDPIDYVNKRTPRR. A helical transmembrane segment spans residues 162-183; sequence AAVLISVTWLIGFSISIPPMLG. At 184 to 202 the chain is on the extracellular side; sequence WRSAEDRANPDACIISQDP. A helical transmembrane segment spans residues 203-225; the sequence is GYTIYSTFGAFYIPLILMLVLYG. Over 226 to 347 the chain is Cytoplasmic; that stretch reads RIFKAARFRI…LARERKTVKT (122 aa). Residues 311 to 332 form a disordered region; it reads LPLPNTPQSSSHENINEKTTGT. Over residues 316–329 the composition is skewed to polar residues; sequence TPQSSSHENINEKT. The 1D-myo-inositol 4-phosphate site is built by S320, K346, T347, and G353. A helical transmembrane segment spans residues 348–371; that stretch reads LGIIMGTFIFCWLPFFIVALVLPF. Topologically, residues 372–379 are extracellular; sequence CAENCYMP. The chain crosses the membrane as a helical span at residues 380 to 404; sequence EWLGAVINWLGYSNSLLNPIIYAYF. The short motif at 397–401 is the NPxxY motif; important for ligand-induced conformation changes and signaling element; that stretch reads NPIIY. 1D-myo-inositol 4-phosphate is bound by residues F404, N405, and K406. Residues 405–423 lie on the Cytoplasmic side of the membrane; it reads NKDFQSAFKKILRCKFHRH.

The protein belongs to the G-protein coupled receptor 1 family. 5-hydroxytryptamine receptor subfamily.

It is found in the cell membrane. G-protein coupled receptor activity is regulated by lipids: phosphatidylinositol 4-phosphate increases HTR1A-mediated activity. Functionally, G-protein coupled receptor for 5-hydroxytryptamine (serotonin). Also functions as a receptor for various drugs and psychoactive substances. Ligand binding causes a conformation change that triggers signaling via guanine nucleotide-binding proteins (G proteins) and modulates the activity of downstream effectors, such as adenylate cyclase. HTR1A is coupled to G(i)/G(o) G alpha proteins and mediates inhibitory neurotransmission: signaling inhibits adenylate cyclase activity and activates a phosphatidylinositol-calcium second messenger system that regulates the release of Ca(2+) ions from intracellular stores. Beta-arrestin family members regulate signaling by mediating both receptor desensitization and resensitization processes. The chain is 5-hydroxytryptamine receptor 1A-alpha (htr1aa) from Takifugu rubripes (Japanese pufferfish).